The sequence spans 96 residues: Large ribosomal subunit protein bL27 (96 aa).

Residues 1-9 constitute a propeptide that is removed on maturation; it reads MLRLDLQFF. The segment at 14 to 35 is disordered; sequence GVGSTKNGRDSQSKRLGAKRAD.

It belongs to the bacterial ribosomal protein bL27 family. In terms of processing, the N-terminus is cleaved by ribosomal processing cysteine protease Prp.

This Bacillus cytotoxicus (strain DSM 22905 / CIP 110041 / 391-98 / NVH 391-98) protein is Large ribosomal subunit protein bL27.